Reading from the N-terminus, the 255-residue chain is MLKRQSAPLGTWLMSASASTAEALGYAGFDWLLVDMEHVPIEFRDLWHILQAIQCTGAQPIVRVAANDPVLLKRALDLGSTNVMVPFVENAEQARAAVSAVKYPPMGTRGFAAVHRASRYGTWKGYGQQANDSVSCILQIETATALANLEEIAAVPGVDALFLGPGDLSSVCGHIGNPAHPDIQAMISDAIVRCKAIGMPIGIVGGTPELVGSYLEQGYAFAAVASDMAMMMSKANELLVALKGRQAPEAVATAY.

Residue H38 is the Proton acceptor of the active site. E141 and D167 together coordinate a divalent metal cation.

Belongs to the HpcH/HpaI aldolase family. In terms of assembly, homohexamer; trimer of dimers. Requires a divalent metal cation as cofactor.

The catalysed reaction is 2-dehydro-3,6-dideoxy-6-sulfo-D-gluconate = (2S)-3-sulfolactaldehyde + pyruvate. Functionally, catalyzes the retro-aldol cleavage of 2-dehydro-3,6-dideoxy-6-sulfo-D-gluconate to (2S)-3-sulfolactaldehyde and pyruvate. Is involved in a degradation pathway of sulfoquinovose (SQ) that allows P.putida SQ1 to use SQ as the sole carbon and energy source for growth. This Pseudomonas putida (Arthrobacter siderocapsulatus) protein is 2-dehydro-3,6-dideoxy-6-sulfogluconate aldolase.